A 199-amino-acid chain; its full sequence is Photosystem I reaction center subunit XI (199 aa).

Transmembrane regions (helical) follow at residues 108 to 128 and 165 to 185; these read LTAGLLATIGAVHILTALFVL and FWLGGCGGAVFAWLLVGTLHL.

This sequence belongs to the PsaL family.

The protein resides in the cellular thylakoid membrane. This Prochlorococcus marinus (strain MIT 9301) protein is Photosystem I reaction center subunit XI.